A 314-amino-acid chain; its full sequence is 4-hydroxy-3-methylbut-2-enyl diphosphate reductase (314 aa).

Cys12 provides a ligand contact to [4Fe-4S] cluster. Positions 41 and 74 each coordinate (2E)-4-hydroxy-3-methylbut-2-enyl diphosphate. Dimethylallyl diphosphate-binding residues include His41 and His74. Isopentenyl diphosphate is bound by residues His41 and His74. Cys96 serves as a coordination point for [4Fe-4S] cluster. Residue His124 coordinates (2E)-4-hydroxy-3-methylbut-2-enyl diphosphate. His124 is a binding site for dimethylallyl diphosphate. His124 contacts isopentenyl diphosphate. Catalysis depends on Glu126, which acts as the Proton donor. Position 167 (Thr167) interacts with (2E)-4-hydroxy-3-methylbut-2-enyl diphosphate. Cys197 is a binding site for [4Fe-4S] cluster. (2E)-4-hydroxy-3-methylbut-2-enyl diphosphate-binding residues include Ser225, Ser226, Asn227, and Ser269. Positions 225, 226, 227, and 269 each coordinate dimethylallyl diphosphate. Positions 225, 226, 227, and 269 each coordinate isopentenyl diphosphate.

This sequence belongs to the IspH family. The cofactor is [4Fe-4S] cluster.

The catalysed reaction is isopentenyl diphosphate + 2 oxidized [2Fe-2S]-[ferredoxin] + H2O = (2E)-4-hydroxy-3-methylbut-2-enyl diphosphate + 2 reduced [2Fe-2S]-[ferredoxin] + 2 H(+). The enzyme catalyses dimethylallyl diphosphate + 2 oxidized [2Fe-2S]-[ferredoxin] + H2O = (2E)-4-hydroxy-3-methylbut-2-enyl diphosphate + 2 reduced [2Fe-2S]-[ferredoxin] + 2 H(+). The protein operates within isoprenoid biosynthesis; dimethylallyl diphosphate biosynthesis; dimethylallyl diphosphate from (2E)-4-hydroxy-3-methylbutenyl diphosphate: step 1/1. It functions in the pathway isoprenoid biosynthesis; isopentenyl diphosphate biosynthesis via DXP pathway; isopentenyl diphosphate from 1-deoxy-D-xylulose 5-phosphate: step 6/6. In terms of biological role, catalyzes the conversion of 1-hydroxy-2-methyl-2-(E)-butenyl 4-diphosphate (HMBPP) into a mixture of isopentenyl diphosphate (IPP) and dimethylallyl diphosphate (DMAPP). Acts in the terminal step of the DOXP/MEP pathway for isoprenoid precursor biosynthesis. This Haemophilus influenzae (strain PittEE) protein is 4-hydroxy-3-methylbut-2-enyl diphosphate reductase.